The sequence spans 975 residues: Nesprin-3 (975 aa).

The Cytoplasmic segment spans residues 1–925 (MTQQPQEDFE…PCSLLQKACR (925 aa)). Spectrin repeat units follow at residues 220–325 (QDHE…RLRG) and 647–740 (REHC…QALR). Residues 778 to 798 (LINPQDPIPRRQHGANPLEGH) are disordered. Residues 917-975 (CSLLQKACRVALPLQLLLLLFLLLLFLLPAGEEERSCALANNFARSFALMLRYNGPPPT) form the KASH domain. A helical; Anchor for type IV membrane protein membrane pass occupies residues 926–946 (VALPLQLLLLLFLLLLFLLPA). The Perinuclear space portion of the chain corresponds to 947–975 (GEEERSCALANNFARSFALMLRYNGPPPT).

The protein belongs to the nesprin family. As to quaternary structure, core component of LINC complexes which are composed of inner nuclear membrane SUN domain-containing proteins coupled to outer nuclear membrane KASH domain-containing nesprins. SUN and KASH domain-containing proteins seem to bind each other promiscuously; however, differentially expression of LINC complex constituents can give rise to specific assemblies. Interacts with SUN1 and SUN2; probably forming respective LINC complexes. Interacts with PLEC (via actin-binding domain). Interacts with DST. Interacts with SYNE1. Interacts (via KASH domain) with TOR1A (ATP-bound); the interaction is required for SYNE3 nuclear envelope localization. Post-translationally, the disulfid bond with SUN1 or SUN2 is required for stability of the respective LINC complex under tensile forces. In terms of tissue distribution, ubiquitous.

The protein localises to the nucleus outer membrane. It is found in the nucleus envelope. The protein resides in the rough endoplasmic reticulum. As a component of the LINC (LInker of Nucleoskeleton and Cytoskeleton) complex involved in the connection between the nuclear lamina and the cytoskeleton. The nucleocytoplasmic interactions established by the LINC complex play an important role in the transmission of mechanical forces across the nuclear envelope and in nuclear movement and positioning. Probable anchoring protein which tethers the nucleus to the cytoskeleton by binding PLEC which can associate with the intermediate filament system. Plays a role in the regulation of aortic epithelial cell morphology, and is required for flow-induced centrosome polarization and directional migration in aortic endothelial cells. This chain is Nesprin-3 (Syne3), found in Mus musculus (Mouse).